The following is a 425-amino-acid chain: Serine hydroxymethyltransferase 2 (425 aa).

Residues Leu-121 and Gly-125–Leu-127 contribute to the (6S)-5,6,7,8-tetrahydrofolate site. Residue Lys-230 is modified to N6-(pyridoxal phosphate)lysine.

Belongs to the SHMT family. As to quaternary structure, homodimer. The cofactor is pyridoxal 5'-phosphate.

Its subcellular location is the cytoplasm. The catalysed reaction is (6R)-5,10-methylene-5,6,7,8-tetrahydrofolate + glycine + H2O = (6S)-5,6,7,8-tetrahydrofolate + L-serine. Its pathway is one-carbon metabolism; tetrahydrofolate interconversion. It participates in amino-acid biosynthesis; glycine biosynthesis; glycine from L-serine: step 1/1. Catalyzes the reversible interconversion of serine and glycine with tetrahydrofolate (THF) serving as the one-carbon carrier. This reaction serves as the major source of one-carbon groups required for the biosynthesis of purines, thymidylate, methionine, and other important biomolecules. Also exhibits THF-independent aldolase activity toward beta-hydroxyamino acids, producing glycine and aldehydes, via a retro-aldol mechanism. The sequence is that of Serine hydroxymethyltransferase 2 from Mycobacterium tuberculosis (strain CDC 1551 / Oshkosh).